Reading from the N-terminus, the 367-residue chain is Peptide chain release factor 2 (367 aa).

N5-methylglutamine is present on Q254.

Belongs to the prokaryotic/mitochondrial release factor family. Post-translationally, methylated by PrmC. Methylation increases the termination efficiency of RF2.

The protein localises to the cytoplasm. Functionally, peptide chain release factor 2 directs the termination of translation in response to the peptide chain termination codons UGA and UAA. This Aromatoleum aromaticum (strain DSM 19018 / LMG 30748 / EbN1) (Azoarcus sp. (strain EbN1)) protein is Peptide chain release factor 2.